The primary structure comprises 120 residues: NAD(P)H-quinone oxidoreductase subunit 3, chloroplastic (120 aa).

3 helical membrane passes run 9–29, 64–84, and 88–108; these read IFWA…WISA, MFAL…PWAM, and VLGI…VVGL.

The protein belongs to the complex I subunit 3 family. As to quaternary structure, NDH is composed of at least 16 different subunits, 5 of which are encoded in the nucleus.

Its subcellular location is the plastid. The protein resides in the chloroplast thylakoid membrane. The enzyme catalyses a plastoquinone + NADH + (n+1) H(+)(in) = a plastoquinol + NAD(+) + n H(+)(out). The catalysed reaction is a plastoquinone + NADPH + (n+1) H(+)(in) = a plastoquinol + NADP(+) + n H(+)(out). Functionally, NDH shuttles electrons from NAD(P)H:plastoquinone, via FMN and iron-sulfur (Fe-S) centers, to quinones in the photosynthetic chain and possibly in a chloroplast respiratory chain. The immediate electron acceptor for the enzyme in this species is believed to be plastoquinone. Couples the redox reaction to proton translocation, and thus conserves the redox energy in a proton gradient. The sequence is that of NAD(P)H-quinone oxidoreductase subunit 3, chloroplastic from Oryza nivara (Indian wild rice).